The chain runs to 84 residues: Toxin BmKaTx13 (84 aa).

Positions 1–19 (MNYLVMISFALLLMKGVES) are cleaved as a signal peptide. The LCN-type CS-alpha/beta domain occupies 21-83 (RDAYIAKPEN…VPIRVPGKCH (63 aa)). 4 disulfide bridges follow: cysteine 31/cysteine 82, cysteine 35/cysteine 55, cysteine 41/cysteine 65, and cysteine 45/cysteine 67. Residue arginine 84 is a propeptide, removed by a carboxypeptidase.

This sequence belongs to the long (4 C-C) scorpion toxin superfamily. Sodium channel inhibitor family. Alpha subfamily. Expressed by the venom gland.

Its subcellular location is the secreted. In terms of biological role, alpha toxins bind voltage-independently at site-3 of sodium channels (Nav) and inhibit the inactivation of the activated channels, thereby blocking neuronal transmission. This toxin is active against mammals. The sequence is that of Toxin BmKaTx13 from Olivierus martensii (Manchurian scorpion).